The primary structure comprises 167 residues: NAD(P)H-quinone oxidoreductase subunit I, chloroplastic (167 aa).

4Fe-4S ferredoxin-type domains lie at 55–84 (GRIH…VDWK) and 95–124 (LNYS…MTEE). 8 residues coordinate [4Fe-4S] cluster: C64, C67, C70, C74, C104, C107, C110, and C114.

Belongs to the complex I 23 kDa subunit family. As to quaternary structure, NDH is composed of at least 16 different subunits, 5 of which are encoded in the nucleus. Requires [4Fe-4S] cluster as cofactor.

Its subcellular location is the plastid. It is found in the chloroplast thylakoid membrane. It catalyses the reaction a plastoquinone + NADH + (n+1) H(+)(in) = a plastoquinol + NAD(+) + n H(+)(out). It carries out the reaction a plastoquinone + NADPH + (n+1) H(+)(in) = a plastoquinol + NADP(+) + n H(+)(out). Its function is as follows. NDH shuttles electrons from NAD(P)H:plastoquinone, via FMN and iron-sulfur (Fe-S) centers, to quinones in the photosynthetic chain and possibly in a chloroplast respiratory chain. The immediate electron acceptor for the enzyme in this species is believed to be plastoquinone. Couples the redox reaction to proton translocation, and thus conserves the redox energy in a proton gradient. The chain is NAD(P)H-quinone oxidoreductase subunit I, chloroplastic from Barbarea verna (Land cress).